Consider the following 349-residue polypeptide: 5-deoxyribose 1-phosphate isomerase (349 aa).

Residues 49 to 51 (RGA), R92, and Q199 contribute to the substrate site. Residue D240 is the Proton donor of the active site. 250 to 251 (NK) contacts substrate.

This sequence belongs to the EIF-2B alpha/beta/delta subunits family. DrdI subfamily.

It catalyses the reaction 5-deoxy-alpha-D-ribose 1-phosphate = 5-deoxy-D-ribulose 1-phosphate. It participates in carbohydrate degradation. Its function is as follows. Catalyzes the isomerization of 5-deoxy-alpha-D-ribose 1-phosphate to 5-deoxy-D-ribulose 1-phosphate, as part of a 5-deoxyribose salvage pathway that recycles this toxic radical SAM enzyme by-product to mainstream metabolites. The sequence is that of 5-deoxyribose 1-phosphate isomerase from Clostridium botulinum (strain Langeland / NCTC 10281 / Type F).